Here is a 601-residue protein sequence, read N- to C-terminus: Coronin-like protein crn1 (601 aa).

WD repeat units follow at residues 79-119 (GHTA…TVME), 132-172 (GHSR…AHVS), 174-213 (KMDV…PVSV), 220-260 (AKNP…EPIG), and 266-306 (DTGS…FHYL). 2 disordered regions span residues 361–386 (SDIY…KDAQ) and 407–540 (SATV…VEEK). Composition is skewed to basic and acidic residues over residues 419–429 (KHNEEKVETPK), 437–453 (KPKE…EPEV), and 462–495 (KVEE…EKSF). 2 positions are modified to phosphoserine: Ser500 and Ser501. The span at 507-526 (EDVKKEPSEEKKLEVSDEAP) shows a compositional bias: basic and acidic residues. A Phosphoserine modification is found at Ser553. The stretch at 556 to 600 (NLADLNKRFEGFEKRYEEELAIRDWKIAQLEDKLAKLTEAIKEKC) forms a coiled coil.

The protein belongs to the WD repeat coronin family. Binds to F-actin.

The sequence is that of Coronin-like protein crn1 (crn1) from Schizosaccharomyces pombe (strain 972 / ATCC 24843) (Fission yeast).